The primary structure comprises 348 residues: Probable dual-specificity RNA methyltransferase RlmN (348 aa).

Catalysis depends on glutamate 89, which acts as the Proton acceptor. Positions 95–328 constitute a Radical SAM core domain; the sequence is HKNRNTVCVS…VTLRISYGSK (234 aa). Residues cysteine 102 and cysteine 333 are joined by a disulfide bond. [4Fe-4S] cluster is bound by residues cysteine 109, cysteine 113, and cysteine 116. Residues 159-160, serine 191, 214-216, and asparagine 290 contribute to the S-adenosyl-L-methionine site; these read GE and SLH. Cysteine 333 serves as the catalytic S-methylcysteine intermediate.

This sequence belongs to the radical SAM superfamily. RlmN family. The cofactor is [4Fe-4S] cluster.

Its subcellular location is the cytoplasm. It catalyses the reaction adenosine(2503) in 23S rRNA + 2 reduced [2Fe-2S]-[ferredoxin] + 2 S-adenosyl-L-methionine = 2-methyladenosine(2503) in 23S rRNA + 5'-deoxyadenosine + L-methionine + 2 oxidized [2Fe-2S]-[ferredoxin] + S-adenosyl-L-homocysteine. The enzyme catalyses adenosine(37) in tRNA + 2 reduced [2Fe-2S]-[ferredoxin] + 2 S-adenosyl-L-methionine = 2-methyladenosine(37) in tRNA + 5'-deoxyadenosine + L-methionine + 2 oxidized [2Fe-2S]-[ferredoxin] + S-adenosyl-L-homocysteine. In terms of biological role, specifically methylates position 2 of adenine 2503 in 23S rRNA and position 2 of adenine 37 in tRNAs. The polypeptide is Probable dual-specificity RNA methyltransferase RlmN (Dictyoglomus turgidum (strain DSM 6724 / Z-1310)).